The chain runs to 101 residues: Putative pterin-4-alpha-carbinolamine dehydratase (101 aa).

Belongs to the pterin-4-alpha-carbinolamine dehydratase family.

The catalysed reaction is (4aS,6R)-4a-hydroxy-L-erythro-5,6,7,8-tetrahydrobiopterin = (6R)-L-erythro-6,7-dihydrobiopterin + H2O. This chain is Putative pterin-4-alpha-carbinolamine dehydratase, found in Rhodopseudomonas palustris (strain HaA2).